We begin with the raw amino-acid sequence, 349 residues long: MLLSSLISLALLSSQVVADPAWAPPDKGLKPEVARLLPPFLRYRRPIYAIAHRVVTVGGIKDAISHGANAFEVDMCADSIGEGWWANHDCTNGRKAGDSARKIFETFAAERKRGKTVTFVWLDFKNPDACVKNQGCSIEAIQQLCRDILEKQGIRVLYGFYKAEDSRAFKTIRNNLNDREAISLNGATTKVLKLFEGTAPKVSKHQRVMDYGDTYLDKGFGDCTEKDWYTCTELRQGADLRRKGKLGKVFAWTSTVNQGRLVDQLLGKAHVDGIIYGFKLTDYYDHADSRAAANDIISWVKRRRALYYMATNDNNPWIDIHKLFLYLLSWFSCILLLMMNEWTCPQDGA.

The first 18 residues, 1–18 (MLLSSLISLALLSSQVVA), serve as a signal peptide directing secretion. Residue His-52 is part of the active site. Residues Glu-72, Asp-74, and Asp-123 each coordinate Mg(2+). The SMD-tail motif lies at 310–317 (ATNDNNPW).

Belongs to the sphingomyelinase D/phospholipase D family. The cofactor is Mg(2+).

It localises to the secreted. The enzyme catalyses a sphingomyelin + H2O = an N-acylsphing-4-enine 1-phosphate + choline + H(+). Catalyzes the hydrolysis of sphingomyelin. Sphingomyelinases D are produced by some spider in their venoms, but also by arthropods such as ticks, or pathogenic bacteria and fungi. They might play a role in pathogenicity through different mechanisms, such as membrane destabilization and host cell penetration, but also pulmonary inflammation and cutaneous lesions. The sequence is that of Sphingomyelinase D from Uncinocarpus reesii (strain UAMH 1704).